Here is a 264-residue protein sequence, read N- to C-terminus: Probable aquaporin TIP3-1 (264 aa).

The next 2 membrane-spanning stretches (helical) occupy residues 28–48 (AAIS…GSIL) and 62–82 (GLVA…AVAV). An NPA 1 motif is present at residues 90–92 (NPA). 3 consecutive transmembrane segments (helical) span residues 105-125 (LIRA…ATLL), 149-169 (AVLL…ATVI), and 176-196 (VGTI…LAGG). An NPA 2 motif is present at residues 204 to 206 (NPA). The chain crosses the membrane as a helical span at residues 224–244 (YWLGPFVGAGLAGLLYEYLVI).

It belongs to the MIP/aquaporin (TC 1.A.8) family. TIP (TC 1.A.8.10) subfamily. As to expression, expressed in leaves and at lower levels in roots.

The protein localises to the vacuole membrane. Functionally, aquaporins facilitate the transport of water and small neutral solutes across cell membranes. May be involved in transport from the vacuolar compartment to the cytoplasm. The chain is Probable aquaporin TIP3-1 (TIP3-1) from Oryza sativa subsp. japonica (Rice).